Consider the following 241-residue polypeptide: Ribonuclease PH (241 aa).

Phosphate-binding positions include arginine 89 and 127 to 129 (GTR).

It belongs to the RNase PH family. Homohexameric ring arranged as a trimer of dimers.

It carries out the reaction tRNA(n+1) + phosphate = tRNA(n) + a ribonucleoside 5'-diphosphate. Functionally, phosphorolytic 3'-5' exoribonuclease that plays an important role in tRNA 3'-end maturation. Removes nucleotide residues following the 3'-CCA terminus of tRNAs; can also add nucleotides to the ends of RNA molecules by using nucleoside diphosphates as substrates, but this may not be physiologically important. Probably plays a role in initiation of 16S rRNA degradation (leading to ribosome degradation) during starvation. The protein is Ribonuclease PH of Xanthomonas euvesicatoria pv. vesicatoria (strain 85-10) (Xanthomonas campestris pv. vesicatoria).